We begin with the raw amino-acid sequence, 100 residues long: MFYFISRKFYDQFKYGILTDKTNKLLKNNVYTFDVDIQMSKRQFKDLIETAFSVKITSVNSYVKSSKYYRSNNFEGMKKYYKRMFIKLNDLETIPFFSCL.

This sequence belongs to the universal ribosomal protein uL23 family. Part of the 50S ribosomal subunit.

It localises to the plastid. Its subcellular location is the chloroplast. Binds to 23S rRNA. In Euglena gracilis, this protein is Large ribosomal subunit protein uL23c (rpl23).